Consider the following 503-residue polypeptide: Maturase K (503 aa).

This sequence belongs to the intron maturase 2 family. MatK subfamily.

It localises to the plastid. The protein localises to the chloroplast. Usually encoded in the trnK tRNA gene intron. Probably assists in splicing its own and other chloroplast group II introns. This Caragana arborescens (Siberian pea tree) protein is Maturase K.